The primary structure comprises 268 residues: Tryptophan synthase alpha chain (268 aa).

Catalysis depends on proton acceptor residues E49 and D60.

This sequence belongs to the TrpA family. Tetramer of two alpha and two beta chains.

It catalyses the reaction (1S,2R)-1-C-(indol-3-yl)glycerol 3-phosphate + L-serine = D-glyceraldehyde 3-phosphate + L-tryptophan + H2O. It participates in amino-acid biosynthesis; L-tryptophan biosynthesis; L-tryptophan from chorismate: step 5/5. The alpha subunit is responsible for the aldol cleavage of indoleglycerol phosphate to indole and glyceraldehyde 3-phosphate. The protein is Tryptophan synthase alpha chain of Haemophilus influenzae (strain PittEE).